Reading from the N-terminus, the 100-residue chain is NADH-quinone oxidoreductase subunit K (100 aa).

The next 3 helical transmembrane spans lie at 4–24, 28–48, and 60–80; these read LQHG…GLVI, LLFM…AFVV, and VMYI…LALL.

It belongs to the complex I subunit 4L family. In terms of assembly, NDH-1 is composed of 13 different subunits. Subunits NuoA, H, J, K, L, M, N constitute the membrane sector of the complex.

The protein localises to the cell inner membrane. It catalyses the reaction a quinone + NADH + 5 H(+)(in) = a quinol + NAD(+) + 4 H(+)(out). Functionally, NDH-1 shuttles electrons from NADH, via FMN and iron-sulfur (Fe-S) centers, to quinones in the respiratory chain. The immediate electron acceptor for the enzyme in this species is believed to be ubiquinone. Couples the redox reaction to proton translocation (for every two electrons transferred, four hydrogen ions are translocated across the cytoplasmic membrane), and thus conserves the redox energy in a proton gradient. In Shigella boydii serotype 18 (strain CDC 3083-94 / BS512), this protein is NADH-quinone oxidoreductase subunit K.